The following is a 564-amino-acid chain: 4-hydroxy-7-methoxy-3-oxo-3,4-dihydro-2H-1,4-benzoxazin-2-yl glucoside beta-D-glucosidase 1d, chloroplastic (564 aa).

The N-terminal 50 residues, 1-50 (MALLAAATLNPTTHLSLRSRAGRNSENLWLRSAASSQKSKGRFCNLTVRA), are a transit peptide targeting the chloroplast. A beta-D-glucoside contacts are provided by residues Gln92, His194, and 239-240 (NE). The Proton donor role is filled by Glu240. A disulfide bridge connects residues Cys259 and Cys265. A beta-D-glucoside contacts are provided by residues Tyr383, Glu456, Trp504, 511 to 512 (EW), and Phe520. Glu456 serves as the catalytic Nucleophile.

The protein belongs to the glycosyl hydrolase 1 family. In terms of assembly, homo- and heterohexamers. As to expression, expressed in young seedlings early after germination.

The protein resides in the plastid. The protein localises to the chloroplast. The enzyme catalyses Hydrolysis of terminal, non-reducing beta-D-glucosyl residues with release of beta-D-glucose.. The catalysed reaction is DIMBOA beta-D-glucoside + H2O = DIMBOA + D-glucose. It catalyses the reaction DIBOA beta-D-glucoside + H2O = DIBOA + D-glucose. In terms of biological role, acts in defense of young plant parts against pests via the production of hydroxamic acids from hydroxamic acid glucosides. Enzymatic activity is highly correlated with plant growth. The preferred substrate is DIMBOA-beta-D-glucoside. This chain is 4-hydroxy-7-methoxy-3-oxo-3,4-dihydro-2H-1,4-benzoxazin-2-yl glucoside beta-D-glucosidase 1d, chloroplastic (GLU1D), found in Triticum aestivum (Wheat).